Consider the following 341-residue polypeptide: Ketol-acid reductoisomerase (NADP(+)) (341 aa).

A KARI N-terminal Rossmann domain is found at 2 to 181 (AKVYYNGDAN…GAARAGVLET (180 aa)). NADP(+)-binding positions include 25–28 (YGSQ), R48, S52, and 82–85 (DEKQ). H107 is a catalytic residue. Residue G133 participates in NADP(+) binding. The 146-residue stretch at 182-327 (TFKEETETDL…RELRSMMPFV (146 aa)) folds into the KARI C-terminal knotted domain. Positions 190, 194, 226, and 230 each coordinate Mg(2+). S251 lines the substrate pocket.

It belongs to the ketol-acid reductoisomerase family. The cofactor is Mg(2+).

It carries out the reaction (2R)-2,3-dihydroxy-3-methylbutanoate + NADP(+) = (2S)-2-acetolactate + NADPH + H(+). It catalyses the reaction (2R,3R)-2,3-dihydroxy-3-methylpentanoate + NADP(+) = (S)-2-ethyl-2-hydroxy-3-oxobutanoate + NADPH + H(+). It participates in amino-acid biosynthesis; L-isoleucine biosynthesis; L-isoleucine from 2-oxobutanoate: step 2/4. It functions in the pathway amino-acid biosynthesis; L-valine biosynthesis; L-valine from pyruvate: step 2/4. Its function is as follows. Involved in the biosynthesis of branched-chain amino acids (BCAA). Catalyzes an alkyl-migration followed by a ketol-acid reduction of (S)-2-acetolactate (S2AL) to yield (R)-2,3-dihydroxy-isovalerate. In the isomerase reaction, S2AL is rearranged via a Mg-dependent methyl migration to produce 3-hydroxy-3-methyl-2-ketobutyrate (HMKB). In the reductase reaction, this 2-ketoacid undergoes a metal-dependent reduction by NADPH to yield (R)-2,3-dihydroxy-isovalerate. The polypeptide is Ketol-acid reductoisomerase (NADP(+)) (Geobacillus kaustophilus (strain HTA426)).